Here is a 194-residue protein sequence, read N- to C-terminus: NADH-quinone oxidoreductase subunit B 1 (194 aa).

Residues cysteine 47, cysteine 48, cysteine 113, and cysteine 142 each coordinate [4Fe-4S] cluster.

This sequence belongs to the complex I 20 kDa subunit family. NDH-1 is composed of 14 different subunits. Subunits NuoB, C, D, E, F, and G constitute the peripheral sector of the complex. Requires [4Fe-4S] cluster as cofactor.

It localises to the cell inner membrane. It carries out the reaction a quinone + NADH + 5 H(+)(in) = a quinol + NAD(+) + 4 H(+)(out). Functionally, NDH-1 shuttles electrons from NADH, via FMN and iron-sulfur (Fe-S) centers, to quinones in the respiratory chain. The immediate electron acceptor for the enzyme in this species is believed to be ubiquinone. Couples the redox reaction to proton translocation (for every two electrons transferred, four hydrogen ions are translocated across the cytoplasmic membrane), and thus conserves the redox energy in a proton gradient. The protein is NADH-quinone oxidoreductase subunit B 1 of Sorangium cellulosum (strain So ce56) (Polyangium cellulosum (strain So ce56)).